The primary structure comprises 287 residues: Rhomboid-like protein 18 (287 aa).

Transmembrane regions (helical) follow at residues 10–30 (NAPVTKAFVIATALFTVFFGI), 53–73 (LIISAFAFSSTTQLLSGLYLL), 90–110 (VFIFFSGFVSLILETILLSLT), 117–137 (LLTSGPYALVFASFVPFFLDI), 145–165 (VLGVHFSDKSFIYLAGVQLLL), and 172–192 (IFTGICGIIAGSLYRLNIFGI). Residues 244-284 (EPSEEAIATLVSMGFDQNAARQALVHARNDVNAATNILLEA) form the UBA domain.

Belongs to the peptidase S54 family.

It localises to the membrane. In terms of biological role, probable rhomboid-type serine protease that catalyzes intramembrane proteolysis. The protein is Rhomboid-like protein 18 of Arabidopsis thaliana (Mouse-ear cress).